Here is a 130-residue protein sequence, read N- to C-terminus: Histone H2B (130 aa).

The disordered stretch occupies residues Met-1–Met-31. Lys-122 participates in a covalent cross-link: Glycyl lysine isopeptide (Lys-Gly) (interchain with G-Cter in ubiquitin).

It belongs to the histone H2B family. As to quaternary structure, the nucleosome is a histone octamer containing two molecules each of H2A, H2B, H3 and H4 assembled in one H3-H4 heterotetramer and two H2A-H2B heterodimers. The octamer wraps approximately 147 bp of DNA. Post-translationally, monoubiquitinated to form H2BK123ub1. H2BK123ub1 gives a specific tag for epigenetic transcriptional activation and is also prerequisite for H3K4me and H3K79me formation.

The protein resides in the nucleus. It is found in the chromosome. Core component of nucleosome. Nucleosomes wrap and compact DNA into chromatin, limiting DNA accessibility to the cellular machineries which require DNA as a template. Histones thereby play a central role in transcription regulation, DNA repair, DNA replication and chromosomal stability. DNA accessibility is regulated via a complex set of post-translational modifications of histones, also called histone code, and nucleosome remodeling. The sequence is that of Histone H2B (HTB1) from Encephalitozoon cuniculi (strain GB-M1) (Microsporidian parasite).